The following is a 64-amino-acid chain: Small ribosomal subunit protein eS17 (64 aa).

The protein belongs to the eukaryotic ribosomal protein eS17 family.

This chain is Small ribosomal subunit protein eS17, found in Halorubrum lacusprofundi (strain ATCC 49239 / DSM 5036 / JCM 8891 / ACAM 34).